Consider the following 420-residue polypeptide: MVSRQEQFEQVQAVKKSINTASEEVKNQALLAMADHLVAATEEILAANALDMAAAKGKISDVMLDRLYLDADRIEAMARGIREVVALPDPIGEVLETSQLENGLVITKKRVAMGVIGIIYESRPNVTSDAAALTLKSGNAVVLRSGKDAYQTTHAIVTALKKGLETTTIHPNVIQLVEDTSRESSYAMMKAKGYLDLLIPRGGAGLINAVVENAIVPVIETGTGIVHVYVDKDADEDKALSIINNAKTSRPSVCNAMEVLLVHENKAASFLPRLEQVLVAERKEAGLEPIQFRLDSKASQFVSGQAAQAQDFDTEFLDYILAVKVVSSLEEAVAHIESHSTHHSDAIVTENAEAAAYFTDQVDSAAVYVNASTRFTDGGQFGLGCEMGISTQKLHARGPMGLKELTSYKYVVAGDGQIRE.

It belongs to the gamma-glutamyl phosphate reductase family.

The protein resides in the cytoplasm. It catalyses the reaction L-glutamate 5-semialdehyde + phosphate + NADP(+) = L-glutamyl 5-phosphate + NADPH + H(+). It functions in the pathway amino-acid biosynthesis; L-proline biosynthesis; L-glutamate 5-semialdehyde from L-glutamate: step 2/2. In terms of biological role, catalyzes the NADPH-dependent reduction of L-glutamate 5-phosphate into L-glutamate 5-semialdehyde and phosphate. The product spontaneously undergoes cyclization to form 1-pyrroline-5-carboxylate. In Streptococcus pneumoniae (strain JJA), this protein is Gamma-glutamyl phosphate reductase.